Here is a 522-residue protein sequence, read N- to C-terminus: Leucine-rich repeat transmembrane neuronal protein 1 (522 aa).

An N-terminal signal peptide occupies residues methionine 1–alanine 34. Residues alanine 35–asparagine 63 enclose the LRRNT domain. At alanine 35 to lysine 427 the chain is on the extracellular side. N-linked (GlcNAc...) asparagine glycans are attached at residues asparagine 56 and asparagine 63. LRR repeat units follow at residues leucine 64–glycine 87, methionine 89–lysine 111, leucine 112–proline 135, proline 137–glycine 159, arginine 161–aspartate 183, cysteine 184–glycine 207, phenylalanine 209–arginine 231, isoleucine 233–valine 255, tryptophan 256–threonine 278, and valine 279–serine 302. N-linked (GlcNAc...) asparagine glycosylation occurs at asparagine 130. Positions asparagine 314–aspartate 365 constitute an LRRCT domain. Asparagine 380 carries N-linked (GlcNAc...) asparagine glycosylation. Positions serine 382–glutamine 401 are disordered. Residues valine 428–valine 448 traverse the membrane as a helical segment. Topologically, residues serine 449 to valine 522 are cytoplasmic.

The protein belongs to the LRRTM family. In terms of tissue distribution, predominantly expressed in forebrain regions including thalamus and cerebral cortex.

The protein resides in the cell membrane. It localises to the postsynaptic cell membrane. Its function is as follows. Exhibits strong synaptogenic activity, restricted to excitatory presynaptic differentiation, acting at both pre- and postsynaptic level. The sequence is that of Leucine-rich repeat transmembrane neuronal protein 1 (LRRTM1) from Homo sapiens (Human).